Consider the following 225-residue polypeptide: Cytidylate kinase (225 aa).

Position 11 to 19 (11 to 19 (GPAAAGKST)) interacts with ATP.

It belongs to the cytidylate kinase family. Type 1 subfamily.

It is found in the cytoplasm. It carries out the reaction CMP + ATP = CDP + ADP. The catalysed reaction is dCMP + ATP = dCDP + ADP. This Bacillus cytotoxicus (strain DSM 22905 / CIP 110041 / 391-98 / NVH 391-98) protein is Cytidylate kinase.